A 425-amino-acid polypeptide reads, in one-letter code: CinA-like protein (425 aa).

Belongs to the CinA family.

The protein is CinA-like protein of Shewanella sp. (strain MR-4).